Here is a 462-residue protein sequence, read N- to C-terminus: Neuronal acetylcholine receptor subunit non-alpha-2 (462 aa).

Positions 1–30 are cleaved as a signal peptide; it reads MTLAVIGLFTLFTSIIAITPAREFVSLAER. At 31 to 234 the chain is on the extracellular side; it reads EDALLRELFQ…ITYSFILKRL (204 aa). N53 and N168 each carry an N-linked (GlcNAc...) asparagine glycan. C155 and C169 form a disulfide bridge. The next 3 helical transmembrane spans lie at 235 to 259, 267 to 284, and 301 to 322; these read PLFY…VFYL, VSLS…LLVI, and YLLF…VINV. The Cytoplasmic segment spans residues 323 to 428; sequence HHRSSATYHP…WKFVAQVLDR (106 aa). A compositionally biased stretch (basic and acidic residues) spans 362-372; the sequence is ELEPHSPDLKP. Positions 362-384 are disordered; it reads ELEPHSPDLKPRNKKGPPGPEGE. The helical transmembrane segment at 429-446 threads the bilayer; that stretch reads IFLWTFLTVSVLGTILIF.

This sequence belongs to the ligand-gated ion channel (TC 1.A.9) family. Acetylcholine receptor (TC 1.A.9.1) subfamily. In terms of assembly, neuronal AChR seems to be composed of two different type of subunits: alpha and beta.

It localises to the postsynaptic cell membrane. Its subcellular location is the cell membrane. Its function is as follows. After binding acetylcholine, the AChR responds by an extensive change in conformation that affects all subunits and leads to opening of an ion-conducting channel across the plasma membrane. The polypeptide is Neuronal acetylcholine receptor subunit non-alpha-2 (Carassius auratus (Goldfish)).